A 122-amino-acid polypeptide reads, in one-letter code: Small ribosomal subunit protein uS12c (122 aa).

It belongs to the universal ribosomal protein uS12 family. In terms of assembly, part of the 30S ribosomal subunit.

It localises to the plastid. Its subcellular location is the chloroplast. Functionally, with S4 and S5 plays an important role in translational accuracy. Located at the interface of the 30S and 50S subunits. The polypeptide is Small ribosomal subunit protein uS12c (rps12) (Mesostigma viride (Green alga)).